A 478-amino-acid polypeptide reads, in one-letter code: Odorant receptor coreceptor (478 aa).

Over 1-43 (MMKMKQQGLVADLLPNIRVMKTFGHFVFNYYNDNSSKYLHKVY) the chain is Cytoplasmic. A helical transmembrane segment spans residues 44–64 (CCVNLFMLLLQFGLCAVNLIV). Over 65–73 (ESADVDDLT) the chain is Extracellular. Residues 74–94 (ANTITLLFFTHSIVKICYFAI) traverse the membrane as a helical segment. Residues 95 to 133 (RSKYFYRTWAIWNNPNSHPLFAESNARYHAIALKKMRLL) are Cytoplasmic-facing. The helical transmembrane segment at 134–154 (LFLVGGTTMLAAVAWTVLTFF) threads the bilayer. Over 155–190 (EHPIRKIVDPVTNETEIIELPQLLIRSFYPFDAGKG) the chain is Extracellular. Asparagine 167 carries an N-linked (GlcNAc...) asparagine glycan. Residues 191 to 211 (ITHVLVLVYQFYWVLFMLIDA) form a helical membrane-spanning segment. Over 212-349 (NSLDVLFCSW…IVRLVTAVGD (138 aa)) the chain is Cytoplasmic. The tract at residues 261–281 (SADHLRDGDNPPPPPPPQSDN) is disordered. The helical transmembrane segment at 350–370 (AYGFALLLHMLTTTITLTLLA) threads the bilayer. The Extracellular segment spans residues 371–382 (YQATKVNGINVY). A helical transmembrane segment spans residues 383-403 (AASTIGYILYTFGQVFLFCIF). Topologically, residues 404-454 (GNRLIEESTSVMEAAYSCHWYDGSEEAKTFVQIVCQQCQKAMSISGAKFFT) are cytoplasmic. The helical transmembrane segment at 455-475 (VSLDLFASVLGAVVTYFMVLV) threads the bilayer. Over 476–478 (QLK) the chain is Extracellular.

The protein belongs to the insect chemoreceptor superfamily. Heteromeric odorant receptor channel (TC 1.A.69) family. Orco subfamily. As to quaternary structure, heterodimer with conventional odorant receptors (ORs). As to expression, present in antennae (at protein level).

Its subcellular location is the cell membrane. Its function is as follows. Odorant coreceptor which complexes with conventional odorant receptors (ORs) to form odorant-sensing units, providing sensitive and prolonged odorant signaling and calcium permeability. Obligate coreceptor of all odorant receptors. Orco is a universal and integral part of the functional odorant receptor, involved in the dendritic localization of other olfactory receptors. Can form functional ion channels in the absence of an odor-binding odorant receptor. Plays a central role in the perception of olfactory stimuli in ants and is essential for ant social organization. Required for pheromone sensing. Also required for the development and maintenance of odorant receptor neurons (ORNs) and of antennal lobe glomeruli. The chain is Odorant receptor coreceptor from Ooceraea biroi (Clonal raider ant).